We begin with the raw amino-acid sequence, 230 residues long: uncharacterized protein (230 aa).

The first 16 residues, 1 to 16 (MTCVNVCFFLFPPCHR), serve as a signal peptide directing secretion. The next 4 helical transmembrane spans lie at 27 to 47 (VDLL…IPLI), 118 to 138 (LFFF…FLFF), 150 to 170 (FPIL…LSFL), and 172 to 191 (SLSH…LRVF).

Its subcellular location is the cytoplasm. It localises to the nucleus membrane. This is an uncharacterized protein from Schizosaccharomyces pombe (strain 972 / ATCC 24843) (Fission yeast).